Here is a 547-residue protein sequence, read N- to C-terminus: Glucose-6-phosphate isomerase 2 (547 aa).

The Proton donor role is filled by E351. Active-site residues include H382 and K508.

The protein belongs to the GPI family.

Its subcellular location is the cytoplasm. It carries out the reaction alpha-D-glucose 6-phosphate = beta-D-fructose 6-phosphate. It functions in the pathway carbohydrate biosynthesis; gluconeogenesis. The protein operates within carbohydrate degradation; glycolysis; D-glyceraldehyde 3-phosphate and glycerone phosphate from D-glucose: step 2/4. Functionally, catalyzes the reversible isomerization of glucose-6-phosphate to fructose-6-phosphate. The sequence is that of Glucose-6-phosphate isomerase 2 from Neisseria meningitidis serogroup A / serotype 4A (strain DSM 15465 / Z2491).